A 442-amino-acid polypeptide reads, in one-letter code: UDP-N-acetylmuramate--L-alanine ligase (442 aa).

Position 109–115 (109–115 (GAHGKTS)) interacts with ATP.

It belongs to the MurCDEF family.

It localises to the cytoplasm. The enzyme catalyses UDP-N-acetyl-alpha-D-muramate + L-alanine + ATP = UDP-N-acetyl-alpha-D-muramoyl-L-alanine + ADP + phosphate + H(+). Its pathway is cell wall biogenesis; peptidoglycan biosynthesis. In terms of biological role, cell wall formation. This chain is UDP-N-acetylmuramate--L-alanine ligase, found in Streptococcus pyogenes serotype M49 (strain NZ131).